The following is a 282-amino-acid chain: MAKILYGNEVALKIKEDLNLRIGKLKEKNIIPKLAILRMGNKPDDIAYERSIIKSCEKLNIETKVEELNEDILEEDFLKLMESLNNEKETHGILVFRPYPKHLNENIINSSIALNKDVDCMHPLNLERIFEGDLNGFMPCTPEAVIEILKYYDIDLKGKNIVIINRSMVVGKPLSMMVLSHNATVTICHSKTIDLPSITKRADIVVTAIGKAKLIKEEYFNEDSIVIDVSINVDENGKLCGDVDFENVKEKVGAITPVPKGVGSVTTTLLLKHIVDAAERNS.

NADP(+)-binding positions include 165–167 (NRS), Ser-190, and Ile-231.

Belongs to the tetrahydrofolate dehydrogenase/cyclohydrolase family. Homodimer.

The catalysed reaction is (6R)-5,10-methylene-5,6,7,8-tetrahydrofolate + NADP(+) = (6R)-5,10-methenyltetrahydrofolate + NADPH. It catalyses the reaction (6R)-5,10-methenyltetrahydrofolate + H2O = (6R)-10-formyltetrahydrofolate + H(+). It participates in one-carbon metabolism; tetrahydrofolate interconversion. In terms of biological role, catalyzes the oxidation of 5,10-methylenetetrahydrofolate to 5,10-methenyltetrahydrofolate and then the hydrolysis of 5,10-methenyltetrahydrofolate to 10-formyltetrahydrofolate. The polypeptide is Bifunctional protein FolD (Clostridium botulinum (strain 657 / Type Ba4)).